The sequence spans 385 residues: GTP cyclohydrolase 1 type 2 homolog (385 aa).

A divalent metal cation is bound by residues histidine 64, histidine 65, aspartate 103, histidine 333, and glutamate 337.

Belongs to the GTP cyclohydrolase I type 2/NIF3 family. As to quaternary structure, homohexamer.

The sequence is that of GTP cyclohydrolase 1 type 2 homolog from Mycobacterium leprae (strain TN).